We begin with the raw amino-acid sequence, 401 residues long: Imidazolonepropionase (401 aa).

H66 and H68 together coordinate Fe(3+). H66 and H68 together coordinate Zn(2+). 3 residues coordinate 4-imidazolone-5-propanoate: R75, Y138, and H171. Y138 is an N-formimidoyl-L-glutamate binding site. H236 serves as a coordination point for Fe(3+). Position 236 (H236) interacts with Zn(2+). Q239 contributes to the 4-imidazolone-5-propanoate binding site. D311 contributes to the Fe(3+) binding site. Residue D311 participates in Zn(2+) binding. Residues N313 and G315 each contribute to the N-formimidoyl-L-glutamate site. Position 316 (T316) interacts with 4-imidazolone-5-propanoate.

The protein belongs to the metallo-dependent hydrolases superfamily. HutI family. Zn(2+) is required as a cofactor. The cofactor is Fe(3+).

It localises to the cytoplasm. It catalyses the reaction 4-imidazolone-5-propanoate + H2O = N-formimidoyl-L-glutamate. The protein operates within amino-acid degradation; L-histidine degradation into L-glutamate; N-formimidoyl-L-glutamate from L-histidine: step 3/3. In terms of biological role, catalyzes the hydrolytic cleavage of the carbon-nitrogen bond in imidazolone-5-propanoate to yield N-formimidoyl-L-glutamate. It is the third step in the universal histidine degradation pathway. The sequence is that of Imidazolonepropionase from Pseudomonas fluorescens (strain Pf0-1).